A 638-amino-acid chain; its full sequence is MPIITLPDGSKKVFEKSVTILEIAQSIGAGLAKATIAGKVNDVLLDATIPINKDSKVVIITSKDKEGIEIIRHSFAHLIGHAVKQIYSDIKMAIGPVIEDGFYYDIFSEYRFTPEDLIKIENRINQLIKTNYDVEILQVSKEEAIKTFKERDETFKLRIIEEIPEEGLINLYKHEEYIDMCRGPHVPNTRHLRHFKLLKLSGSYWRGNSENESLQRIYGTAWAKEKELKDYLTRIEEAEKRDHRKLGKKHSLFHIQEESPGMIFWHPNGWTIYQVLEKYIREILKKNDYLEIKTPQAVDKSLWEKSGHWEKFRDDMFTTASENRTYAIKPMNCPCHIQIFNQGLKSYKDLPIRLAEFGSCHRNEPSGALHGLMRVRNFTQDDAHIFCTEEQIQEEVSTFIDLVFEVYKTFGFDEIIIKLSTRPEKRVGSEDIWDKSEEALTKALDNKNLKWELQPGEGAFYGPKIEFSLKDCLNRVWQCGTIQVDFSMPIRLDATYVDIDNEKRNPVMLHRAILGSFERFIGILIEQYEAKFPIWLAPYQIILLSITDRNIEKCLKFNELINNNGYRSKVDIRNEKIGYKIREATLGRVPLIAVIGDKEEEIDSVALRALNGKNLGIFNLPNLFKLMDELIEKKGRTE.

The region spanning 1–61 (MPIITLPDGS…NKDSKVVIIT (61 aa)) is the TGS domain. Residues 242–533 (DHRKLGKKHS…LIEQYEAKFP (292 aa)) form a catalytic region. Zn(2+)-binding residues include Cys-333, His-384, and His-510.

Belongs to the class-II aminoacyl-tRNA synthetase family. Homodimer. Requires Zn(2+) as cofactor.

Its subcellular location is the cytoplasm. It catalyses the reaction tRNA(Thr) + L-threonine + ATP = L-threonyl-tRNA(Thr) + AMP + diphosphate + H(+). Its function is as follows. Catalyzes the attachment of threonine to tRNA(Thr) in a two-step reaction: L-threonine is first activated by ATP to form Thr-AMP and then transferred to the acceptor end of tRNA(Thr). Also edits incorrectly charged L-seryl-tRNA(Thr). The protein is Threonine--tRNA ligase of Prochlorococcus marinus (strain AS9601).